A 183-amino-acid chain; its full sequence is ATP synthase subunit delta (183 aa).

The protein belongs to the ATPase delta chain family. In terms of assembly, F-type ATPases have 2 components, F(1) - the catalytic core - and F(0) - the membrane proton channel. F(1) has five subunits: alpha(3), beta(3), gamma(1), delta(1), epsilon(1). F(0) has three main subunits: a(1), b(2) and c(10-14). The alpha and beta chains form an alternating ring which encloses part of the gamma chain. F(1) is attached to F(0) by a central stalk formed by the gamma and epsilon chains, while a peripheral stalk is formed by the delta and b chains.

It localises to the cell inner membrane. Functionally, f(1)F(0) ATP synthase produces ATP from ADP in the presence of a proton or sodium gradient. F-type ATPases consist of two structural domains, F(1) containing the extramembraneous catalytic core and F(0) containing the membrane proton channel, linked together by a central stalk and a peripheral stalk. During catalysis, ATP synthesis in the catalytic domain of F(1) is coupled via a rotary mechanism of the central stalk subunits to proton translocation. Its function is as follows. This protein is part of the stalk that links CF(0) to CF(1). It either transmits conformational changes from CF(0) to CF(1) or is implicated in proton conduction. The sequence is that of ATP synthase subunit delta from Verminephrobacter eiseniae (strain EF01-2).